Reading from the N-terminus, the 175-residue chain is Peptide methionine sulfoxide reductase MsrA (175 aa).

Residue C12 is part of the active site.

Belongs to the MsrA Met sulfoxide reductase family.

It carries out the reaction L-methionyl-[protein] + [thioredoxin]-disulfide + H2O = L-methionyl-(S)-S-oxide-[protein] + [thioredoxin]-dithiol. The enzyme catalyses [thioredoxin]-disulfide + L-methionine + H2O = L-methionine (S)-S-oxide + [thioredoxin]-dithiol. Has an important function as a repair enzyme for proteins that have been inactivated by oxidation. Catalyzes the reversible oxidation-reduction of methionine sulfoxide in proteins to methionine. The sequence is that of Peptide methionine sulfoxide reductase MsrA from Limosilactobacillus reuteri (strain DSM 20016) (Lactobacillus reuteri).